A 555-amino-acid chain; its full sequence is Membrane protein insertase YidC (555 aa).

Residues Ile-7–Gln-24 form a helical membrane-spanning segment. Low complexity-rich tracts occupy residues Gln-40–Ala-54 and Ala-64–Gly-81. Residues Gln-40–Gly-81 are disordered. The next 5 membrane-spanning stretches (helical) occupy residues Leu-334 to Leu-354, Phe-360 to Phe-380, Leu-430 to Leu-450, Leu-468 to Gln-488, and Val-503 to Val-523.

It belongs to the OXA1/ALB3/YidC family. Type 1 subfamily. Interacts with the Sec translocase complex via SecD. Specifically interacts with transmembrane segments of nascent integral membrane proteins during membrane integration.

Its subcellular location is the cell inner membrane. Functionally, required for the insertion and/or proper folding and/or complex formation of integral membrane proteins into the membrane. Involved in integration of membrane proteins that insert both dependently and independently of the Sec translocase complex, as well as at least some lipoproteins. Aids folding of multispanning membrane proteins. The chain is Membrane protein insertase YidC from Cupriavidus metallidurans (strain ATCC 43123 / DSM 2839 / NBRC 102507 / CH34) (Ralstonia metallidurans).